The sequence spans 639 residues: Chaperone protein DnaK (639 aa).

Threonine 198 carries the post-translational modification Phosphothreonine; by autocatalysis. A disordered region spans residues 601-639 (AQQAPGADSCGGDCGQQQEAGAKPKDEKVVDADFEEVKK). The segment covering 622–639 (AKPKDEKVVDADFEEVKK) has biased composition (basic and acidic residues).

Belongs to the heat shock protein 70 family.

Acts as a chaperone. In Trichlorobacter lovleyi (strain ATCC BAA-1151 / DSM 17278 / SZ) (Geobacter lovleyi), this protein is Chaperone protein DnaK.